We begin with the raw amino-acid sequence, 425 residues long: Orexin/Hypocretin receptor type 1 (425 aa).

Residues 1 to 46 (MEPSATPGPQMGVPTGVGDPSLVPPDYEEEFLSYLWRDYLYPKQYE) are Extracellular-facing. The required for response to orexin-A stretch occupies residues 26-41 (DYEEEFLSYLWRDYLY). The chain crosses the membrane as a helical span at residues 47–67 (WVLIAAYVAVFLVALVGNTLV). Topologically, residues 68–82 (CLAVWRNHHMRTVTN) are cytoplasmic. A helical membrane pass occupies residues 83–105 (YFIVNLSLADVLVTAICLPASLL). The Extracellular segment spans residues 106-119 (VDITESWLFGHALC). C119 and C202 are joined by a disulfide. Residues 120 to 140 (KVIPYLQAVSVSVAVLTLSFI) traverse the membrane as a helical segment. The Cytoplasmic segment spans residues 141 to 160 (ALDRWYAIYHPLLFKSTARR). The chain crosses the membrane as a helical span at residues 161–182 (ARGSILGIWAVSPAVMVPQAAV). Residues 183 to 213 (MECSSVLPELANRTRLFSVCDERWADDLYPK) lie on the Extracellular side of the membrane. A helical transmembrane segment spans residues 214–235 (IYHSCFFIVTYLAPLGLMAMAY). At 236 to 298 (FQIFRKLWGR…QMRARRKTAK (63 aa)) the chain is on the cytoplasmic side. Residues 299-321 (MLMVVLLVFALCYLPISVLNVLK) form a helical membrane-spanning segment. Topologically, residues 322–336 (RVFGMFRQTSDREAV) are extracellular. A helical membrane pass occupies residues 337-360 (YACFTFSHWLVYANSAANPIIYNF). Over 361-425 (LSGKFREQFK…VLTSVTTVLP (65 aa)) the chain is Cytoplasmic.

It belongs to the G-protein coupled receptor 1 family.

The protein localises to the cell membrane. Moderately selective excitatory receptor for orexin-A and, with a lower affinity, for orexin-B neuropeptide. Triggers an increase in cytoplasmic Ca(2+) levels in response to orexin-A binding. The protein is Orexin/Hypocretin receptor type 1 of Sus scrofa (Pig).